Consider the following 359-residue polypeptide: S-adenosylmethionine:tRNA ribosyltransferase-isomerase (359 aa).

It belongs to the QueA family. Monomer.

Its subcellular location is the cytoplasm. The enzyme catalyses 7-aminomethyl-7-carbaguanosine(34) in tRNA + S-adenosyl-L-methionine = epoxyqueuosine(34) in tRNA + adenine + L-methionine + 2 H(+). It participates in tRNA modification; tRNA-queuosine biosynthesis. In terms of biological role, transfers and isomerizes the ribose moiety from AdoMet to the 7-aminomethyl group of 7-deazaguanine (preQ1-tRNA) to give epoxyqueuosine (oQ-tRNA). This is S-adenosylmethionine:tRNA ribosyltransferase-isomerase from Ralstonia pickettii (strain 12J).